Reading from the N-terminus, the 364-residue chain is Alanine racemase (364 aa).

The active-site Proton acceptor; specific for D-alanine is K35. K35 is subject to N6-(pyridoxal phosphate)lysine. A substrate-binding site is contributed by R136. Y261 acts as the Proton acceptor; specific for L-alanine in catalysis. M309 contributes to the substrate binding site.

This sequence belongs to the alanine racemase family. Pyridoxal 5'-phosphate is required as a cofactor.

It carries out the reaction L-alanine = D-alanine. Its pathway is amino-acid biosynthesis; D-alanine biosynthesis; D-alanine from L-alanine: step 1/1. In terms of biological role, catalyzes the interconversion of L-alanine and D-alanine. May also act on other amino acids. This Shewanella amazonensis (strain ATCC BAA-1098 / SB2B) protein is Alanine racemase (alr).